Consider the following 523-residue polypeptide: Bifunctional purine biosynthesis protein PurH (523 aa).

Residues 1 to 145 (MIKQALLSVS…KNHRDVTVIV (145 aa)) enclose the MGS-like domain.

The protein belongs to the PurH family.

The catalysed reaction is (6R)-10-formyltetrahydrofolate + 5-amino-1-(5-phospho-beta-D-ribosyl)imidazole-4-carboxamide = 5-formamido-1-(5-phospho-D-ribosyl)imidazole-4-carboxamide + (6S)-5,6,7,8-tetrahydrofolate. It catalyses the reaction IMP + H2O = 5-formamido-1-(5-phospho-D-ribosyl)imidazole-4-carboxamide. The protein operates within purine metabolism; IMP biosynthesis via de novo pathway; 5-formamido-1-(5-phospho-D-ribosyl)imidazole-4-carboxamide from 5-amino-1-(5-phospho-D-ribosyl)imidazole-4-carboxamide (10-formyl THF route): step 1/1. It participates in purine metabolism; IMP biosynthesis via de novo pathway; IMP from 5-formamido-1-(5-phospho-D-ribosyl)imidazole-4-carboxamide: step 1/1. In Cupriavidus pinatubonensis (strain JMP 134 / LMG 1197) (Cupriavidus necator (strain JMP 134)), this protein is Bifunctional purine biosynthesis protein PurH.